The following is a 345-amino-acid chain: Glycerol-3-phosphate dehydrogenase [NAD(P)+] (345 aa).

Ser-11, Trp-12, Arg-32, Arg-33, and Lys-105 together coordinate NADPH. Residues Lys-105, Gly-136, and Ser-138 each coordinate sn-glycerol 3-phosphate. An NADPH-binding site is contributed by Ala-140. 5 residues coordinate sn-glycerol 3-phosphate: Lys-191, Asp-244, Ser-254, Arg-255, and Asn-256. Catalysis depends on Lys-191, which acts as the Proton acceptor. Arg-255 contacts NADPH. The NADPH site is built by Val-279 and Glu-281.

Belongs to the NAD-dependent glycerol-3-phosphate dehydrogenase family.

The protein localises to the cytoplasm. The enzyme catalyses sn-glycerol 3-phosphate + NAD(+) = dihydroxyacetone phosphate + NADH + H(+). It carries out the reaction sn-glycerol 3-phosphate + NADP(+) = dihydroxyacetone phosphate + NADPH + H(+). Its pathway is membrane lipid metabolism; glycerophospholipid metabolism. Functionally, catalyzes the reduction of the glycolytic intermediate dihydroxyacetone phosphate (DHAP) to sn-glycerol 3-phosphate (G3P), the key precursor for phospholipid synthesis. This Halalkalibacterium halodurans (strain ATCC BAA-125 / DSM 18197 / FERM 7344 / JCM 9153 / C-125) (Bacillus halodurans) protein is Glycerol-3-phosphate dehydrogenase [NAD(P)+].